The sequence spans 121 residues: Small ribosomal subunit protein uS11 (121 aa).

The protein belongs to the universal ribosomal protein uS11 family. As to quaternary structure, part of the 30S ribosomal subunit. Interacts with proteins S7 and S18. Binds to IF-3.

Located on the platform of the 30S subunit, it bridges several disparate RNA helices of the 16S rRNA. Forms part of the Shine-Dalgarno cleft in the 70S ribosome. The polypeptide is Small ribosomal subunit protein uS11 (Mycoplasma pneumoniae (strain ATCC 29342 / M129 / Subtype 1) (Mycoplasmoides pneumoniae)).